A 364-amino-acid polypeptide reads, in one-letter code: DNA polymerase IV (364 aa).

The UmuC domain maps to 6–194; sequence VFHIDFDYFY…LKIRDIPGIG (189 aa). Mg(2+) is bound by residues aspartate 10 and aspartate 111. Residue glutamate 112 is part of the active site.

The protein belongs to the DNA polymerase type-Y family. As to quaternary structure, monomer. Requires Mg(2+) as cofactor.

The protein localises to the cytoplasm. The catalysed reaction is DNA(n) + a 2'-deoxyribonucleoside 5'-triphosphate = DNA(n+1) + diphosphate. In terms of biological role, poorly processive, error-prone DNA polymerase involved in untargeted mutagenesis. Copies undamaged DNA at stalled replication forks, which arise in vivo from mismatched or misaligned primer ends. These misaligned primers can be extended by PolIV. Exhibits no 3'-5' exonuclease (proofreading) activity. May be involved in translesional synthesis. The sequence is that of DNA polymerase IV from Nitrosopumilus maritimus (strain SCM1).